A 370-amino-acid chain; its full sequence is S-adenosylmethionine decarboxylase proenzyme (370 aa).

Residue phenylalanine 28 coordinates substrate. Catalysis depends on residues glutamate 29 and glutamate 32. Glutamate 85 lines the substrate pocket. Serine 86 serves as the catalytic Schiff-base intermediate with substrate; via pyruvic acid. Serine 86 is subject to Pyruvic acid (Ser); by autocatalysis. The active-site Proton donor; for catalytic activity is the cysteine 100. Active-site proton acceptor; for processing activity residues include serine 249 and histidine 262. Position 266 (glutamate 266) interacts with substrate.

Belongs to the eukaryotic AdoMetDC family. Forms a heterodimer with catalytically inactive AdoMetDC prozyme; heterodimerization is required to activate AdoMetDC. Requires pyruvate as cofactor. Post-translationally, is synthesized initially as an inactive proenzyme. Formation of the active enzyme involves a self-maturation process in which the active site pyruvoyl group is generated from an internal serine residue via an autocatalytic post-translational modification. Two non-identical subunits are generated from the proenzyme in this reaction, and the pyruvate is formed at the N-terminus of the alpha chain, which is derived from the carboxyl end of the proenzyme. The post-translation cleavage follows an unusual pathway, termed non-hydrolytic serinolysis, in which the side chain hydroxyl group of the serine supplies its oxygen atom to form the C-terminus of the beta chain, while the remainder of the serine residue undergoes an oxidative deamination to produce ammonia and the pyruvoyl group blocking the N-terminus of the alpha chain.

The catalysed reaction is S-adenosyl-L-methionine + H(+) = S-adenosyl 3-(methylsulfanyl)propylamine + CO2. It functions in the pathway amine and polyamine biosynthesis; S-adenosylmethioninamine biosynthesis; S-adenosylmethioninamine from S-adenosyl-L-methionine: step 1/1. With respect to regulation, allosterically activated by AdoMetDC prozyme. Activated by putrescine and to a lesser extent by spermidine, norspermidine and spermine. Inhibited by 5'-([(Z)-4-amino-2-butenyl]methylamino)-5'-deoxyadenosine (MDL 73811). Its function is as follows. In association with the catalytically inactive AdoMetDC prozyme, catalyzes the decarboxylation of S-adenosyl-L-methionine which is essential for the biosynthesis of the polyamine spermidine. Required for growth and survival during the bloodstream life cycle stage. The chain is S-adenosylmethionine decarboxylase proenzyme from Trypanosoma brucei brucei.